A 366-amino-acid chain; its full sequence is MERITVTLGERSYPITIAAGLFNDPASFMPLKAGEQVMLVTNQTLAPLYLDHVRKVLEQAGVMVDQVILPDGEQYKSLAVLEQVFSALLEKPHGRDTTLIALGGGVIGDLTGFAAACYQRGVRFIQVPTTLLSQVDSSVGGKTAVNHPLGKNMIGAFYQPVSVVVDLDCLKTLPARELSSGLAEVIKYGIILDHDFFVWLENNIDALVALDMQALAYCIRRCCELKAEVVAADERESGLRALLNLGHTYGHAIEAEMGYGVWLHGEAIAAGMVMAAETAHRLGQFSREDIERIKALLLRAGLPVCGPQEMAPGTYLPHMMRDKKVLAGELRLVLPTAIGQAEVRGGVGHDMVLASIAACFPDGMSK.

Residues 71–76 (DGEQYK), 105–109 (GVIGD), 129–130 (TT), Lys-142, Lys-151, and 169–172 (CLKT) each bind NAD(+). Zn(2+) is bound by residues Glu-184, His-247, and His-264.

This sequence belongs to the sugar phosphate cyclases superfamily. Dehydroquinate synthase family. Requires Co(2+) as cofactor. It depends on Zn(2+) as a cofactor. NAD(+) serves as cofactor.

Its subcellular location is the cytoplasm. The enzyme catalyses 7-phospho-2-dehydro-3-deoxy-D-arabino-heptonate = 3-dehydroquinate + phosphate. It functions in the pathway metabolic intermediate biosynthesis; chorismate biosynthesis; chorismate from D-erythrose 4-phosphate and phosphoenolpyruvate: step 2/7. Its function is as follows. Catalyzes the conversion of 3-deoxy-D-arabino-heptulosonate 7-phosphate (DAHP) to dehydroquinate (DHQ). The protein is 3-dehydroquinate synthase of Serratia proteamaculans (strain 568).